A 105-amino-acid chain; its full sequence is Thioredoxin (105 aa).

A Thioredoxin domain is found at 1 to 105 (MFELDKDTFE…NVEAMVKKYI (105 aa)). An intrachain disulfide couples cysteine 29 to cysteine 32.

The protein belongs to the thioredoxin family.

Participates in various redox reactions through the reversible oxidation of its active center dithiol to a disulfide and catalyzes dithiol-disulfide exchange reactions. The polypeptide is Thioredoxin (trxA) (Acetoanaerobium sticklandii (strain ATCC 12662 / DSM 519 / JCM 1433 / CCUG 9281 / NCIMB 10654 / HF) (Clostridium sticklandii)).